The chain runs to 171 residues: MTTSCPPPSISDREEQARILCLRLLTARSRTRAQLFGQLAKRGYADHVSERVLDRLAAVGLLDDNDFAEQWVRSRRANVGKSKRALAADLRAKGIDSEVITTVLAGIDPAVERERAEQLVRTRLRREVLSEDDARVSRRLMAMLARRGYSQTTICEVVVAELAAERERRRV.

The protein belongs to the RecX family.

It is found in the cytoplasm. In terms of biological role, modulates RecA activity. The protein is Regulatory protein RecX of Mycobacterium leprae (strain Br4923).